Consider the following 254-residue polypeptide: 3-beta-hydroxysteroid dehydrogenase (254 aa).

NAD(+) contacts are provided by residues 12 to 40 (VTGGASGVGLEVVKLLLGEGAKVAFSDIN) and Asp61. Ser139 contacts substrate. Tyr152 serves as the catalytic Proton acceptor. Lys156 contacts NAD(+).

Belongs to the short-chain dehydrogenases/reductases (SDR) family. As to quaternary structure, homotetramer.

It carries out the reaction testosterone + NAD(+) = androst-4-ene-3,17-dione + NADH + H(+). The enzyme catalyses testosterone + NADP(+) = androst-4-ene-3,17-dione + NADPH + H(+). The polypeptide is 3-beta-hydroxysteroid dehydrogenase (Comamonas testosteroni (Pseudomonas testosteroni)).